The primary structure comprises 454 residues: Ig mu chain C region (454 aa).

The tract at residues Ser1–Val105 is CH1. Cys27 and Cys88 form a disulfide bridge. N-linked (GlcNAc...) asparagine glycans are attached at residues Asn45, Asn112, Asn192, Asn210, Asn238, Asn257, and Asn280. The segment at Val106 to Ser218 is CH2. Cys135 and Cys198 are oxidised to a cystine. The tract at residues Pro219–Glu324 is CH3. 2 cysteine pairs are disulfide-bonded: Cys245–Cys304 and Cys352–Cys414. The tract at residues Met325–Tyr454 is CH4. A glycan (N-linked (GlcNAc...) asparagine) is linked at Asn441.

The protein is Ig mu chain C region of Mesocricetus auratus (Golden hamster).